The sequence spans 116 residues: MGKDTIADIITSIRNADMNKKGTVRIASTNITENIVKILLREGFIENVRKHQEGNKYFLVSTLRHRKTRKRIHRTILKRISRPGLRIYSDYQQIPKILGGIGIVILSTYPRYNDRS.

Belongs to the universal ribosomal protein uS8 family. Part of the 30S ribosomal subunit.

The protein localises to the plastid. It is found in the chloroplast. Its function is as follows. One of the primary rRNA binding proteins, it binds directly to 16S rRNA central domain where it helps coordinate assembly of the platform of the 30S subunit. This Musa acuminata (Banana) protein is Small ribosomal subunit protein uS8c (rps8).